The chain runs to 434 residues: Trehalose-phosphatase (434 aa).

2 residues coordinate Mg(2+): Asp156 and Asp158. Catalysis depends on Asp158, which acts as the Proton donor/acceptor. 275–277 (QKK) contacts substrate. Asp366 provides a ligand contact to Mg(2+).

The protein belongs to the gob-1 trehalose phosphatase family. Mg(2+) is required as a cofactor.

The enzyme catalyses alpha,alpha-trehalose 6-phosphate + H2O = alpha,alpha-trehalose + phosphate. Its function is as follows. Catalyzes the hydrolysis of trehalose 6-phosphate to trehalose and phosphate; prevents the accumulation of toxic levels of trehalose 6-phosphate. The sequence is that of Trehalose-phosphatase (gob-1) from Caenorhabditis briggsae.